Consider the following 375-residue polypeptide: Lipid-A-disaccharide synthase (375 aa).

The protein belongs to the LpxB family.

The catalysed reaction is a lipid X + a UDP-2-N,3-O-bis[(3R)-3-hydroxyacyl]-alpha-D-glucosamine = a lipid A disaccharide + UDP + H(+). The protein operates within bacterial outer membrane biogenesis; LPS lipid A biosynthesis. Functionally, condensation of UDP-2,3-diacylglucosamine and 2,3-diacylglucosamine-1-phosphate to form lipid A disaccharide, a precursor of lipid A, a phosphorylated glycolipid that anchors the lipopolysaccharide to the outer membrane of the cell. In Pseudomonas putida (strain ATCC 700007 / DSM 6899 / JCM 31910 / BCRC 17059 / LMG 24140 / F1), this protein is Lipid-A-disaccharide synthase.